The sequence spans 706 residues: Envelope glycoprotein H (706 aa).

Residues 1-18 form the signal peptide; sequence MQLLCVFCLVLLWEVGAA. The Virion surface segment spans residues 19–682; sequence SLSEVKLHLD…LYEERAHVVL (664 aa). N60 carries N-linked (GlcNAc...) asparagine; by host glycosylation. The segment at 165-229 is interaction with gL; it reads DKFQYTGAMT…QSGDYSLVIV (65 aa). C278 and C335 are oxidised to a cystine. The N-linked (GlcNAc...) asparagine; by host glycan is linked to N435. 2 disulfide bridges follow: C454/C478 and C534/C587. 2 N-linked (GlcNAc...) asparagine; by host glycosylation sites follow: N549 and N604. An intrachain disulfide couples C612 to C615. N664 is a glycosylation site (N-linked (GlcNAc...) asparagine; by host). Residues 683-703 traverse the membrane as a helical segment; the sequence is AIILYFIAFALGIFLVHKIVM. Topologically, residues 704–706 are intravirion; the sequence is FFL.

It belongs to the herpesviridae glycoprotein H family. Interacts with glycoprotein L (gL); this interaction is necessary for the correct processing and cell surface expression of gH. The heterodimer gH/gL seems to interact with gB trimers during fusion. The heterodimer gH/gL interacts with host EPHA2 to facilitate virus internalization and fusion. Interacts with glycoprotein 42/BZLF2. N-glycosylated, O-glycosylated, and sialylated.

The protein localises to the virion membrane. It is found in the host cell membrane. The protein resides in the host endosome membrane. In terms of biological role, the heterodimer glycoprotein H-glycoprotein L is required for the fusion of viral and plasma membranes leading to virus entry into the host cell. Following initial binding to host receptor, membrane fusion is mediated by the fusion machinery composed of gB and the heterodimer gH/gL. May also be involved in the fusion between the virion envelope and the outer nuclear membrane during virion morphogenesis. The heterodimer gH/gL targets also host EPHA2 to promote viral entry. This is Envelope glycoprotein H from Homo sapiens (Human).